A 342-amino-acid polypeptide reads, in one-letter code: Anthranilate phosphoribosyltransferase (342 aa).

5-phospho-alpha-D-ribose 1-diphosphate-binding positions include glycine 84, 87 to 88, threonine 92, 94 to 97, 112 to 120, and serine 124; these read GD, NITT, and KHGNRSVSS. Position 84 (glycine 84) interacts with anthranilate. Threonine 96 provides a ligand contact to Mg(2+). Residue asparagine 115 coordinates anthranilate. Arginine 170 serves as a coordination point for anthranilate. Positions 228 and 229 each coordinate Mg(2+).

This sequence belongs to the anthranilate phosphoribosyltransferase family. Homodimer. The cofactor is Mg(2+).

The enzyme catalyses N-(5-phospho-beta-D-ribosyl)anthranilate + diphosphate = 5-phospho-alpha-D-ribose 1-diphosphate + anthranilate. Its pathway is amino-acid biosynthesis; L-tryptophan biosynthesis; L-tryptophan from chorismate: step 2/5. In terms of biological role, catalyzes the transfer of the phosphoribosyl group of 5-phosphorylribose-1-pyrophosphate (PRPP) to anthranilate to yield N-(5'-phosphoribosyl)-anthranilate (PRA). This chain is Anthranilate phosphoribosyltransferase, found in Corynebacterium efficiens (strain DSM 44549 / YS-314 / AJ 12310 / JCM 11189 / NBRC 100395).